Here is a 700-residue protein sequence, read N- to C-terminus: Transketolase (700 aa).

Substrate is bound at residue His-45. Thiamine diphosphate contacts are provided by residues Thr-48, His-85, and 133 to 135 (GPL). Asp-177 contacts Mg(2+). Gly-178 and Asn-207 together coordinate thiamine diphosphate. The Mg(2+) site is built by Asn-207 and Ile-209. Residues His-283, Arg-378, and Ser-405 each coordinate substrate. His-283 contributes to the thiamine diphosphate binding site. The active-site Proton donor is the Glu-441. Phe-467 provides a ligand contact to thiamine diphosphate. Substrate is bound by residues His-491, Asp-499, and Arg-552.

Belongs to the transketolase family. As to quaternary structure, homodimer. Mg(2+) is required as a cofactor. It depends on Ca(2+) as a cofactor. The cofactor is Mn(2+). Co(2+) serves as cofactor. Requires thiamine diphosphate as cofactor.

It catalyses the reaction D-sedoheptulose 7-phosphate + D-glyceraldehyde 3-phosphate = aldehydo-D-ribose 5-phosphate + D-xylulose 5-phosphate. In terms of biological role, catalyzes the transfer of a two-carbon ketol group from a ketose donor to an aldose acceptor, via a covalent intermediate with the cofactor thiamine pyrophosphate. This Mycobacterium bovis (strain ATCC BAA-935 / AF2122/97) protein is Transketolase (tkt).